Here is a 74-residue protein sequence, read N- to C-terminus: AECLMIGDTSCVPRLGRRCCYGAWCYCDQQLSCRRVGRKRECGWVEVNCKCGWSWSQRIDDWRADYSCKCPEDQ.

Contains 6 disulfide bonds. Expressed by the venom gland.

The protein localises to the secreted. Potently blocks vertebrate calcium channels Cav1 and Cav2. Is the most active on Cav2.2/CACNA1B (from HEK) (IC(50)=2.3 nM), followed by Cav2.1/CACNA1A (IC(50)=4.3 nM), Cav2.2/CACNA1B (from oocyte) (IC(50)=14.4 nM), Cav1.2/CACNA1C (IC(50)=26.8 nM), and Cav2.3/CACNA1E (IC(50)=96.4 nM). The sequence is that of Omega-filistatoxin-Kh1a from Kukulcania hibernalis (Southern house spider).